Consider the following 126-residue polypeptide: Phosphoribosyl-AMP cyclohydrolase (126 aa).

Mg(2+) is bound at residue aspartate 76. Zn(2+) is bound at residue cysteine 77. The Mg(2+) site is built by aspartate 78 and aspartate 80. Zn(2+) is bound by residues cysteine 94 and cysteine 101.

It belongs to the PRA-CH family. Homodimer. Mg(2+) is required as a cofactor. Zn(2+) serves as cofactor.

The protein localises to the cytoplasm. It carries out the reaction 1-(5-phospho-beta-D-ribosyl)-5'-AMP + H2O = 1-(5-phospho-beta-D-ribosyl)-5-[(5-phospho-beta-D-ribosylamino)methylideneamino]imidazole-4-carboxamide. It participates in amino-acid biosynthesis; L-histidine biosynthesis; L-histidine from 5-phospho-alpha-D-ribose 1-diphosphate: step 3/9. In terms of biological role, catalyzes the hydrolysis of the adenine ring of phosphoribosyl-AMP. The polypeptide is Phosphoribosyl-AMP cyclohydrolase (Ruthia magnifica subsp. Calyptogena magnifica).